Here is a 152-residue protein sequence, read N- to C-terminus: Large ribosomal subunit protein bL9 (152 aa).

It belongs to the bacterial ribosomal protein bL9 family.

Its function is as follows. Binds to the 23S rRNA. This is Large ribosomal subunit protein bL9 from Streptococcus thermophilus (strain CNRZ 1066).